Here is a 496-residue protein sequence, read N- to C-terminus: MLKIKLEKTTFENAKAECGLVFIVNKDFSHAWVKNKELLETFKYEGEGVFLDQENKILYVGVKEDDVHLLRESACLAVRTLKKLAFKSVKVGVYTCGAHSKDNALLENLKALFLGLKLGLYEYDTFKSNKKESVLKEAIVALELHKPCEKTCTNSLEKSAKEALKYAEIMTESLNIVRDLVNTPPMIGTPVYMAEVAQKVAKENHLEIHVHDEKFLEEKKMNAFLAVNKASLGVNPPRLIHLVYKPKKAKKKIALVGKGLTYDCGGLSLKPADYMVTMKADKGGGSAVIGLLNALAKLGVEAEVHGIIGATENMIGPAAYKPDDILISKEGKSIEVRNTDAEGRLVLADCLSYAQDLNPDVIVDFATLTGACVVGLGEFTSAIMGHNEELKNLFETSGLESGELLAKLPFNRHLKKLIESKIADVCNISSSRYGGAITAGLFLNEFIRDEFKDKWLHIDIAGPAYVEKEWDVNSFGASGAGVRACTAFVEELLKKA.

The Mn(2+) site is built by lysine 258 and aspartate 263. Lysine 270 is an active-site residue. Mn(2+) contacts are provided by aspartate 281, aspartate 340, and glutamate 342. Arginine 344 is a catalytic residue.

Belongs to the peptidase M17 family. The cofactor is Mn(2+).

It is found in the cytoplasm. It catalyses the reaction Release of an N-terminal amino acid, Xaa-|-Yaa-, in which Xaa is preferably Leu, but may be other amino acids including Pro although not Arg or Lys, and Yaa may be Pro. Amino acid amides and methyl esters are also readily hydrolyzed, but rates on arylamides are exceedingly low.. It carries out the reaction Release of an N-terminal amino acid, preferentially leucine, but not glutamic or aspartic acids.. Presumably involved in the processing and regular turnover of intracellular proteins. Catalyzes the removal of unsubstituted N-terminal amino acids from various peptides. The protein is Probable cytosol aminopeptidase of Helicobacter pylori (strain HPAG1).